Here is a 312-residue protein sequence, read N- to C-terminus: MEIIFYHPTFNAAWWVNALEKALPHARVREWKVGDNNPADYALVWQPPVEMLAGRRLKAVFALGAGGDAILSKLNAHPEMLDASIPLFRLEDTGMGLQMQEYAVSQVLHWFRRFDDYQALKNQALWKPLPEYTREEFSVGIMGAGVLGAKVAESLQAWGFPLRCWSRSRKSWPGVESYVGREELHAFLNQTRVLINLLPNTAQTVGIINSELLDQLPDGAYVLNLARGVHVQEADLLAALDSGKLKGAMLDVFSQEPLPQESPLWRHPRVAMTPHIAAVTRPAEAIDYISRTITQLEKGEPVTGQVDRARGY.

The active site involves Arg-227. The active-site Proton donor is His-275.

The protein belongs to the D-isomer specific 2-hydroxyacid dehydrogenase family. GhrA subfamily.

The protein localises to the cytoplasm. The enzyme catalyses glycolate + NADP(+) = glyoxylate + NADPH + H(+). It carries out the reaction (R)-glycerate + NAD(+) = 3-hydroxypyruvate + NADH + H(+). It catalyses the reaction (R)-glycerate + NADP(+) = 3-hydroxypyruvate + NADPH + H(+). Catalyzes the NADPH-dependent reduction of glyoxylate and hydroxypyruvate into glycolate and glycerate, respectively. The sequence is that of Glyoxylate/hydroxypyruvate reductase A from Salmonella dublin (strain CT_02021853).